A 922-amino-acid polypeptide reads, in one-letter code: Band 3 anion transport protein (922 aa).

Disordered regions lie at residues 1-36 (MEGP…TMSN) and 355-389 (QHPD…LRTR). Over 1–416 (MEGPGQDTED…LSDIRDALNP (416 aa)) the chain is Cytoplasmic. Residues 10–26 (DALRRSLDPEGYEDTKG) are compositionally biased toward basic and acidic residues. The segment covering 27-36 (SRTSLGTMSN) has biased composition (polar residues). A helical transmembrane segment spans residues 417–440 (QCLAAVIFIYFAALSPAITFGGLL). The Extracellular segment spans residues 441 to 448 (GEKTRGMM). Residues 449 to 469 (GVSELLLSTSVQCLLFSLLSA) form a helical membrane-spanning segment. The Cytoplasmic segment spans residues 470–472 (QPL). The discontinuously helical transmembrane segment at 473–489 (LVVGFSGPLLVFEEAFF) threads the bilayer. Residues 490–498 (RFCEDHGLE) are Extracellular-facing. A helical membrane pass occupies residues 499-519 (YIVGRVWIGFWLILLVLLVVA). Over 520–531 (CEGTVLVRYLSR) the chain is Cytoplasmic. Residues 532–554 (YTQEIFSFLISLIFIYETFAKLV) traverse the membrane as a helical segment. Topologically, residues 555-581 (TIFEAHPLQQSYDTDVSTEPSVPKPNT) are extracellular. The helical transmembrane segment at 582–602 (ALLSLVLMAGTFFLALFLRQF) threads the bilayer. Over 603–613 (KNSVFLPGKVR) the chain is Cytoplasmic. Residues 614–634 (RLIGDFGVPISIFVMALADFF) form a helical membrane-spanning segment. Residues 635–674 (IKDTYTQKLKVPRGLEVTNGTARGWFIHPMGSATPFPIWM) lie on the Extracellular side of the membrane. A glycan (N-linked (GlcNAc...) asparagine) is linked at Asn653. A helical membrane pass occupies residues 675 to 695 (MFASPVPALLVFILIFLETQI). The Cytoplasmic segment spans residues 696-711 (TTLIVSKPERKLVKGS). Residues 712 to 730 (GFHLDLLLIVAMGGLAALF) form a helical membrane-spanning segment. Residues 731 to 748 (GMPWLSATTVRTITHANA) traverse the membrane as a discontinuously helical segment. Residues 749–771 (LTVVGKSAVPGERAHIVEVKEQR) are Cytoplasmic-facing. The next 2 membrane-spanning stretches (helical) occupy residues 772–792 (LSGL…PILK) and 793–811 (YIPL…VTSL). The Cytoplasmic portion of the chain corresponds to 812 to 849 (FGIQLFDRILLLLMPPKYHPKEPYVTRVKTWRITSSPL). An intramembrane region (discontinuously helical) is located at residues 850-880 (TQILVVALLWGVKVSPASLRCPFVLVLTVPL). The Cytoplasmic portion of the chain corresponds to 881 to 922 (RRLLLPRIFSEIELKCLDTDDAVVTFEEAEGQDVYNEVQMPS).

This sequence belongs to the anion exchanger (TC 2.A.31) family. A dimer in solution, it spans the membrane asymmetrically and appears to be tetrameric. In terms of tissue distribution, erythrocytes.

Its subcellular location is the cell membrane. The protein localises to the basolateral cell membrane. It carries out the reaction hydrogencarbonate(in) + chloride(out) = hydrogencarbonate(out) + chloride(in). In terms of biological role, functions both as a transporter that mediates electroneutral anion exchange across the cell membrane and as a structural protein. Major integral membrane glycoprotein of the erythrocyte membrane; required for normal flexibility and stability of the erythrocyte membrane and for normal erythrocyte shape via the interactions of its cytoplasmic domain with cytoskeletal proteins, glycolytic enzymes, and hemoglobin. Functions as a transporter that mediates the 1:1 exchange of inorganic anions across the erythrocyte membrane. Mediates chloride-bicarbonate exchange in the kidney, and is required for normal acidification of the urine. The sequence is that of Band 3 anion transport protein (SLC4A1) from Gallus gallus (Chicken).